We begin with the raw amino-acid sequence, 63 residues long: Large ribosomal subunit protein eL37 (63 aa).

Zn(2+)-binding residues include Cys-20, Cys-23, Cys-35, and Cys-38. The C4-type zinc-finger motif lies at Cys-20–Cys-38.

Belongs to the eukaryotic ribosomal protein eL37 family. The cofactor is Zn(2+).

Binds to the 23S rRNA. This chain is Large ribosomal subunit protein eL37, found in Ignicoccus hospitalis (strain KIN4/I / DSM 18386 / JCM 14125).